We begin with the raw amino-acid sequence, 911 residues long: Alpha-actinin-4 (911 aa).

Residues 1–269 form an actin-binding region; the sequence is MVDYHAANQS…YVSSFYHAFS (269 aa). The interval 12–26 is interaction with VCL; it reads QYGPSSAGNGAGGGG. Phosphotyrosine is present on Tyr-31. Residues 40–61 are interaction with VCL; that stretch reads RDLLLDPAWEKQQRKTFTAWCN. 2 Calponin-homology (CH) domains span residues 50-154 and 163-269; these read KQQR…LRFA and TSAK…HAFS. Positions 84–88 match the LXXLL motif motif; sequence LMLLL. Positions 108-126 are interaction with VCL; that stretch reads KINNVNKALDFIASKGVKL. N6-acetyllysine is present on Lys-114. The segment at 177-192 is polyphosphoinositide (PIP2)-binding; sequence TAPYKNVNVQNFHISW. N6-acetyllysine is present on Lys-214. Phosphothreonine is present on Thr-249. Spectrin repeat units follow at residues 293 to 403, 413 to 518, 528 to 639, and 649 to 752; these read HLME…WLLN, HLAE…ALEK, QLHL…ALLE, and HLRR…EVEN. Lys-592 and Lys-625 each carry N6-acetyllysine. Ser-696 carries the phosphoserine modification. The interval 736–911 is mediates interaction with MICALL2; the sequence is WEQLLTTIAR…STALYGESDL (176 aa). 2 EF-hand domains span residues 765 to 800 and 806 to 841; these read EQMQEFRASFNHFDKDHGGALGPEEFKACLISLGYD and QGEAEFNRIMSLVDPNHSGLVTFQAFIDFMSRETTD. Asp-778 provides a ligand contact to Ca(2+). Position 779 is an N6-acetyllysine (Lys-779). Positions 780 and 789 each coordinate Ca(2+). Position 859 is an N6-acetyllysine (Lys-859). Position 909 is a phosphoserine (Ser-909).

This sequence belongs to the alpha-actinin family. As to quaternary structure, homodimer; antiparallel. Binds TRIM3 at the N-terminus. Interacts with MICALL2 (preferentially in opened conformation); stimulated by RAB13 activation. Identified in a complex with CASK, IQGAP1, MAGI2, NPHS1, SPTAN1 and SPTBN1. Identified in a IGF2BP1-dependent mRNP granule complex containing untranslated mRNAs. Component of the CART complex, at least composed of ACTN4, HGS/HRS, MYO5B and TRIM3. Interacts with MAGI1. Interacts with PDLIM2. Interacts with PPARG and RARA. Binds to VCL; this interaction triggers VCL conformational changes. Interacts with SEPTIN14. Interacts with IGSF8. In terms of tissue distribution, widely expressed.

It is found in the nucleus. The protein localises to the cytoplasm. Its subcellular location is the cell junction. The protein resides in the cytoskeleton. It localises to the stress fiber. It is found in the perinuclear region. F-actin cross-linking protein which is thought to anchor actin to a variety of intracellular structures. This is a bundling protein. Probably involved in vesicular trafficking via its association with the CART complex. The CART complex is necessary for efficient transferrin receptor recycling but not for EGFR degradation. Involved in tight junction assembly in epithelial cells probably through interaction with MICALL2. Links MICALL2 to the actin cytoskeleton and recruits it to the tight junctions. May also function as a transcriptional coactivator, stimulating transcription mediated by the nuclear hormone receptors PPARG and RARA. Association with IGSF8 regulates the immune synapse formation and is required for efficient T-cell activation. The chain is Alpha-actinin-4 from Homo sapiens (Human).